Here is a 113-residue protein sequence, read N- to C-terminus: uncharacterized protein (113 aa).

The first 19 residues, 1-19, serve as a signal peptide directing secretion; the sequence is MLSPLSPRIIAAFTTAVGA.

To M.tuberculosis Rv1291c.

This is an uncharacterized protein from Mycobacterium tuberculosis (strain CDC 1551 / Oshkosh).